A 337-amino-acid polypeptide reads, in one-letter code: MIVLGIETSCDETSVALVEDNTVIANLVYSQIQIHKKFGGVVPEIAAREHLKRLPILFSELISQTNINIERIDGIAVTKGPGLIGALLVGVSFAKGLALRYKKPLVGINHIIGHVYSNYLAYPDLKPPYIVLMVSGGHTLILKVEENNNVTILGRSVDDAVGEAFDKIARLLGLGYPGGPEIDKISKNGNPNAFNFPKPKMYDPDYNFSFSGLKTAVLYEIKRLTKSGYSENNLPIPDLAASAQEVMIDVLLHKVTKAARDNNLKNIVLAGGVAANSRLREKIRALSEEFNFYIPPLEYCSDNAAMIARAGLERIKSGENDGLNFEPVPNFFEMMST.

H110 and H114 together coordinate Fe cation. Residues M133–G137, D166, G179, D183, and N276 each bind substrate. D302 contacts Fe cation.

The protein belongs to the KAE1 / TsaD family. Requires Fe(2+) as cofactor.

It is found in the cytoplasm. The catalysed reaction is L-threonylcarbamoyladenylate + adenosine(37) in tRNA = N(6)-L-threonylcarbamoyladenosine(37) in tRNA + AMP + H(+). Functionally, required for the formation of a threonylcarbamoyl group on adenosine at position 37 (t(6)A37) in tRNAs that read codons beginning with adenine. Is involved in the transfer of the threonylcarbamoyl moiety of threonylcarbamoyl-AMP (TC-AMP) to the N6 group of A37, together with TsaE and TsaB. TsaD likely plays a direct catalytic role in this reaction. This is tRNA N6-adenosine threonylcarbamoyltransferase from Fervidobacterium nodosum (strain ATCC 35602 / DSM 5306 / Rt17-B1).